The sequence spans 389 residues: Smad nuclear interacting protein 1 (389 aa).

Residues 1 to 10 (MKAGKSERER) are compositionally biased toward basic and acidic residues. Positions 1 to 212 (MKAGKSERER…GNKNKEVPVK (212 aa)) are disordered. Ser18 carries the phosphoserine modification. A Glycyl lysine isopeptide (Lys-Gly) (interchain with G-Cter in SUMO); alternate cross-link involves residue Lys28. A Glycyl lysine isopeptide (Lys-Gly) (interchain with G-Cter in SUMO1); alternate cross-link involves residue Lys28. A Glycyl lysine isopeptide (Lys-Gly) (interchain with G-Cter in SUMO2); alternate cross-link involves residue Lys28. A compositionally biased stretch (basic and acidic residues) spans 28–43 (KQERLSPEPVAHRRPD). Ser33 and Ser48 each carry phosphoserine. Low complexity predominate over residues 54–72 (AESGSAGHRGSRARGASRS). Residues 73-95 (PAKKKSKSSGRRSKSPRTKRSRS) are compositionally biased toward basic residues. Residue Ser95 is modified to Phosphoserine. 2 stretches are compositionally biased toward basic and acidic residues: residues 103–138 (VKQEREDHPRRGREDRQHRELSEQEHRRARNSERDR) and 147–163 (RSSDERPVSGQGRDRDS). A Glycyl lysine isopeptide (Lys-Gly) (interchain with G-Cter in SUMO2) cross-link involves residue Lys104. Phosphoserine is present on Ser149. Residues 166 to 197 (LQAQEEERDFNNARRREHRQQNESAGAEAQEV) are a coiled coil. Lys214 is covalently cross-linked (Glycyl lysine isopeptide (Lys-Gly) (interchain with G-Cter in SUMO2)). An FHA domain is found at 272–335 (YLLGRHRRIA…NGTFLNNKRI (64 aa)). Positions 363–373 (ESSDTSELDRK) are enriched in basic and acidic residues. The disordered stretch occupies residues 363 to 389 (ESSDTSELDRKEDEDEEEEEEMVSDSS). Residues 374–389 (EDEDEEEEEEMVSDSS) show a composition bias toward acidic residues. Ser386 is modified (phosphoserine).

In terms of assembly, component of activated spliceosome complexes. Component of the minor spliceosome, which splices U12-type introns. Binds SMAD4 and CREBBP/EP300. Binds the SMAD1/OAZ1/PSMB4 complex. Interacts with DROSHA and SMARCA4. Component of the SNARP complex which consists at least of SNIP1, SNW1, THRAP3, BCLAF1 and PNN. In terms of processing, degraded by the proteasome upon binding to the SMAD1/OAZ1/PSMB4 complex.

The protein resides in the nucleus. Required for pre-mRNA splicing as component of the spliceosome. As a component of the minor spliceosome, involved in the splicing of U12-type introns in pre-mRNAs. Down-regulates NF-kappa-B signaling by competing with RELA for CREBBP/EP300 binding. Involved in the microRNA (miRNA) biogenesis. May be involved in cyclin-D1/CCND1 mRNA stability through the SNARP complex which associates with both the 3'end of the CCND1 gene and its mRNA. This Rattus norvegicus (Rat) protein is Smad nuclear interacting protein 1 (Snip1).